The sequence spans 107 residues: Small polypeptide DEVIL 9 (107 aa).

A compositionally biased stretch (basic and acidic residues) spans 1-12 (MDEKWRLSKKDA). A disordered region spans residues 1 to 79 (MDEKWRLSKK…EKGSITQKYS (79 aa)). A helical membrane pass occupies residues 9–29 (KKDALAASCSSSSTSSKSKFS). Low complexity predominate over residues 13 to 65 (LAASCSSSSTSSKSKFSRSFSTSASSSKAPAFVRSSSTKCSVPSSSSSSISRS). A required for DVL/RTFL small polypeptide activity region spans residues 73-104 (SITQKYSSLAKEQKGRFYIMRRCVAMLVCWHK).

This sequence belongs to the DVL/RTFL small polypeptides family.

The protein localises to the cell membrane. In terms of biological role, small polypeptide acting as a regulatory molecule which coordinates cellular responses required for differentiation, growth and development, probably by restricting polar cell proliferation in lateral organs and coordinating socket cell recruitment and differentiation at trichome sites. This chain is Small polypeptide DEVIL 9, found in Arabidopsis thaliana (Mouse-ear cress).